Consider the following 327-residue polypeptide: Vacuolar protein sorting-associated protein 26A (327 aa).

The interval 306–327 (RTNFHQRFESPESQASAEQPEM) is disordered. S315 is subject to Phosphoserine. Over residues 316–327 (PESQASAEQPEM) the composition is skewed to polar residues.

The protein belongs to the VPS26 family. In terms of assembly, component of the heterotrimeric retromer cargo-selective complex (CSC), also described as vacuolar protein sorting subcomplex (VPS), formed by VPS26 (VPS26A or VPS26B), VPS29 and VPS35. The CSC has a highly elongated structure with VPS26 and VPS29 binding independently at opposite distal ends of VPS35 as central platform. The CSC is believed to associate with variable sorting nexins to form functionally distinct retromer complex variants. The originally described retromer complex (also called SNX-BAR retromer) is a pentamer containing the CSC and a heterodimeric membrane-deforming subcomplex formed between SNX1 or SNX2 and SNX5 or SNX6 (also called SNX-BAR subcomplex); the respective CSC and SNX-BAR subcomplexes associate with low affinity. The CSC associates with SNX3 to form a SNX3-retromer complex. The CSC associates with SNX27, the WASH complex and the SNX-BAR subcomplex to form the SNX27-retromer complex. Interacts with VPS29, VPS35, SNX27, SNX1, SNX2, SNX5, SNX6, SNX3, RAB7A, ECPAS, EHD1, WASHC5, SORL1.

The protein resides in the cytoplasm. It is found in the endosome membrane. It localises to the early endosome. In terms of biological role, acts as a component of the retromer cargo-selective complex (CSC). The CSC is believed to be the core functional component of retromer or respective retromer complex variants acting to prevent missorting of selected transmembrane cargo proteins into the lysosomal degradation pathway. The recruitment of the CSC to the endosomal membrane involves RAB7A and SNX3. The SNX-BAR retromer mediates retrograde transport of cargo proteins from endosomes to the trans-Golgi network (TGN) and is involved in endosome-to-plasma membrane transport for cargo protein recycling. The SNX3-retromer mediates the retrograde endosome-to-TGN transport of WLS distinct from the SNX-BAR retromer pathway. The SNX27-retromer is believed to be involved in endosome-to-plasma membrane trafficking and recycling of a broad spectrum of cargo proteins. The CSC complex seems to act as recruitment hub for other proteins, such as the WASH complex and TBC1D5. Required for retrograde transport of lysosomal enzyme receptor IGF2R. Required to regulate transcytosis of the polymeric immunoglobulin receptor (pIgR-pIgA). Required for the endosomal localization of WASHC2 (indicative for the WASH complex). Required for the endosomal localization of TBC1D5. Mediates retromer cargo recognition of SORL1 and is involved in trafficking of SORL1 implicated in sorting and processing of APP. Involved in retromer-independent lysosomal sorting of F2R. Involved in recycling of ADRB2. Acts redundantly with VSP26B in SNX-27 mediated endocytic recycling of SLC2A1/GLUT1. Enhances the affinity of SNX27 for PDZ-binding motifs in cargo proteins. This is Vacuolar protein sorting-associated protein 26A (Vps26a) from Rattus norvegicus (Rat).